A 459-amino-acid polypeptide reads, in one-letter code: Putrescine aminotransferase (459 aa).

Residues 150–151 (GT) and Q274 each bind pyridoxal 5'-phosphate. K300 bears the N6-(pyridoxal phosphate)lysine mark. T332 serves as a coordination point for pyridoxal 5'-phosphate.

Belongs to the class-III pyridoxal-phosphate-dependent aminotransferase family. Putrescine aminotransferase subfamily. The cofactor is pyridoxal 5'-phosphate.

It carries out the reaction an alkane-alpha,omega-diamine + 2-oxoglutarate = an omega-aminoaldehyde + L-glutamate. The enzyme catalyses putrescine + 2-oxoglutarate = 1-pyrroline + L-glutamate + H2O. It catalyses the reaction cadaverine + 2-oxoglutarate = 5-aminopentanal + L-glutamate. Its pathway is amine and polyamine degradation; putrescine degradation; 4-aminobutanal from putrescine (transaminase route): step 1/1. Its function is as follows. Catalyzes the aminotransferase reaction from putrescine to 2-oxoglutarate, leading to glutamate and 4-aminobutanal, which spontaneously cyclizes to form 1-pyrroline. This is the first step in one of two pathways for putrescine degradation, where putrescine is converted into 4-aminobutanoate (gamma-aminobutyrate or GABA) via 4-aminobutanal. Also functions as a cadaverine transaminase in a a L-lysine degradation pathway to succinate that proceeds via cadaverine, glutarate and L-2-hydroxyglutarate. The chain is Putrescine aminotransferase from Salmonella dublin (strain CT_02021853).